Consider the following 280-residue polypeptide: Uroporphyrinogen-III C-methyltransferase (280 aa).

S-adenosyl-L-homocysteine contacts are provided by residues proline 24, 100–102 (GGD), 130–131 (TA), methionine 184, alanine 213, and alanine 241.

The protein belongs to the precorrin methyltransferase family. As to quaternary structure, homodimer.

It catalyses the reaction uroporphyrinogen III + 2 S-adenosyl-L-methionine = precorrin-2 + 2 S-adenosyl-L-homocysteine + H(+). The enzyme catalyses uroporphyrinogen III + S-adenosyl-L-methionine = precorrin-1 + S-adenosyl-L-homocysteine + H(+). It carries out the reaction precorrin-1 + S-adenosyl-L-methionine = precorrin-2 + S-adenosyl-L-homocysteine. It participates in cofactor biosynthesis; adenosylcobalamin biosynthesis; precorrin-2 from uroporphyrinogen III: step 1/1. It functions in the pathway porphyrin-containing compound metabolism; siroheme biosynthesis; precorrin-2 from uroporphyrinogen III: step 1/1. S-adenosylhomocysteine is an extremely powerful competitive inhibitor of the uroporphyrinogen III methylation. SUMT exhibits a substrate inhibition phenomenon at uroporphyrinogen III concentrations above 2 uM; this property might play a regulatory role in cobalamin biosynthesis. The enzyme activity is completely insensitive to feedback inhibition by cobalamin and corrinoid intermediates. Its function is as follows. Catalyzes the two successive C-2 and C-7 methylation reactions involved in the conversion of uroporphyrinogen III to precorrin-2 via the intermediate formation of precorrin-1. It is a step in the biosynthesis of both cobalamin (vitamin B12) and siroheme. Neither uroporphyrin III nor the chlorin (factor I) is a substrate of SUMT. This is Uroporphyrinogen-III C-methyltransferase from Sinorhizobium sp.